The following is a 238-amino-acid chain: Ribonuclease 3 (238 aa).

Residues isoleucine 4 to glycine 127 enclose the RNase III domain. Mg(2+) is bound at residue glutamate 40. Aspartate 44 is a catalytic residue. The Mg(2+) site is built by asparagine 113 and glutamate 116. Glutamate 116 is a catalytic residue. The 70-residue stretch at aspartate 154 to arginine 223 folds into the DRBM domain.

This sequence belongs to the ribonuclease III family. Homodimer. Requires Mg(2+) as cofactor.

Its subcellular location is the cytoplasm. The enzyme catalyses Endonucleolytic cleavage to 5'-phosphomonoester.. Digests double-stranded RNA. Involved in the processing of primary rRNA transcript to yield the immediate precursors to the large and small rRNAs (23S and 16S). Processes some mRNAs, and tRNAs when they are encoded in the rRNA operon. Processes pre-crRNA and tracrRNA of type II CRISPR loci if present in the organism. This is Ribonuclease 3 from Wolinella succinogenes (strain ATCC 29543 / DSM 1740 / CCUG 13145 / JCM 31913 / LMG 7466 / NCTC 11488 / FDC 602W) (Vibrio succinogenes).